A 399-amino-acid chain; its full sequence is Imidazolonepropionase (399 aa).

Fe(3+)-binding residues include H68 and H70. Residues H68 and H70 each contribute to the Zn(2+) site. R77, Y140, and H173 together coordinate 4-imidazolone-5-propanoate. Y140 contributes to the N-formimidoyl-L-glutamate binding site. Fe(3+) is bound at residue H238. A Zn(2+)-binding site is contributed by H238. Q241 contacts 4-imidazolone-5-propanoate. Residue D313 coordinates Fe(3+). D313 is a binding site for Zn(2+). N-formimidoyl-L-glutamate-binding residues include N315 and G317. Residue T318 participates in 4-imidazolone-5-propanoate binding.

This sequence belongs to the metallo-dependent hydrolases superfamily. HutI family. Requires Zn(2+) as cofactor. Fe(3+) serves as cofactor.

It is found in the cytoplasm. It carries out the reaction 4-imidazolone-5-propanoate + H2O = N-formimidoyl-L-glutamate. It participates in amino-acid degradation; L-histidine degradation into L-glutamate; N-formimidoyl-L-glutamate from L-histidine: step 3/3. Its function is as follows. Catalyzes the hydrolytic cleavage of the carbon-nitrogen bond in imidazolone-5-propanoate to yield N-formimidoyl-L-glutamate. It is the third step in the universal histidine degradation pathway. The protein is Imidazolonepropionase of Rhizorhabdus wittichii (strain DSM 6014 / CCUG 31198 / JCM 15750 / NBRC 105917 / EY 4224 / RW1) (Sphingomonas wittichii).